A 362-amino-acid chain; its full sequence is DNA replication and repair protein RecF (362 aa).

30 to 37 is a binding site for ATP; sequence GLNAQGKS.

The protein belongs to the RecF family.

It localises to the cytoplasm. Its function is as follows. The RecF protein is involved in DNA metabolism; it is required for DNA replication and normal SOS inducibility. RecF binds preferentially to single-stranded, linear DNA. It also seems to bind ATP. This chain is DNA replication and repair protein RecF, found in Thermoanaerobacter pseudethanolicus (strain ATCC 33223 / 39E) (Clostridium thermohydrosulfuricum).